We begin with the raw amino-acid sequence, 346 residues long: Probable choline kinase 3 (346 aa).

Positions 71, 207, and 224 each coordinate ATP.

It belongs to the choline/ethanolamine kinase family.

The enzyme catalyses choline + ATP = phosphocholine + ADP + H(+). It participates in phospholipid metabolism; phosphatidylcholine biosynthesis; phosphocholine from choline: step 1/1. In terms of biological role, involved in phospholipid biosynthesis. Catalyzes the first step in phosphatidylcholine biosynthesis. This Arabidopsis thaliana (Mouse-ear cress) protein is Probable choline kinase 3.